A 556-amino-acid chain; its full sequence is Formate--tetrahydrofolate ligase (556 aa).

Position 65–72 (65–72 (TPAGEGKS)) interacts with ATP.

It belongs to the formate--tetrahydrofolate ligase family.

It catalyses the reaction (6S)-5,6,7,8-tetrahydrofolate + formate + ATP = (6R)-10-formyltetrahydrofolate + ADP + phosphate. It functions in the pathway one-carbon metabolism; tetrahydrofolate interconversion. The chain is Formate--tetrahydrofolate ligase from Streptococcus pneumoniae (strain Taiwan19F-14).